The sequence spans 110 residues: UPF0122 protein lin1916 (110 aa).

This sequence belongs to the UPF0122 family.

In terms of biological role, might take part in the signal recognition particle (SRP) pathway. This is inferred from the conservation of its genetic proximity to ftsY/ffh. May be a regulatory protein. In Listeria innocua serovar 6a (strain ATCC BAA-680 / CLIP 11262), this protein is UPF0122 protein lin1916.